The primary structure comprises 193 residues: uncharacterized protein (193 aa).

Helical transmembrane passes span 8–28 (GVLV…VVAI), 46–66 (FFIA…VASA), 82–102 (GLSI…ALVV), and 141–161 (IALT…LLAA).

To M.leprae ML1222.

It localises to the cell membrane. This is an uncharacterized protein from Mycobacterium tuberculosis (strain CDC 1551 / Oshkosh).